The sequence spans 253 residues: Sulfate transporter CysZ (253 aa).

4 helical membrane-spanning segments follow: residues 31–51, 72–92, 151–171, and 222–242; these read FVIL…WWLF, LSYI…GYFF, IVLL…PVLW, and IPVL…AMWV.

Belongs to the CysZ family.

The protein localises to the cell inner membrane. High affinity, high specificity proton-dependent sulfate transporter, which mediates sulfate uptake. Provides the sulfur source for the cysteine synthesis pathway. This chain is Sulfate transporter CysZ, found in Escherichia fergusonii (strain ATCC 35469 / DSM 13698 / CCUG 18766 / IAM 14443 / JCM 21226 / LMG 7866 / NBRC 102419 / NCTC 12128 / CDC 0568-73).